The sequence spans 297 residues: UBX domain-containing protein 1 (297 aa).

At Ala-2 the chain carries N-acetylalanine. Residues 2–42 (AELTALESLIEMGFPKGRAEKALALTGNQGIEAAMDWLMEH) form the UBA domain. Residues 40 to 210 (MEHEDDPDVD…PSREPPTKRE (171 aa)) are disordered. An interaction with BRCA1 region spans residues 43–297 (EDDPDVDEPL…VLIVAKKCPG (255 aa)). 2 stretches are compositionally biased toward basic and acidic residues: residues 86–122 (LTEE…ERER) and 137–177 (RLQE…ERAK). Residues 86–176 (LTEEERQEQT…KIERDKAERA (91 aa)) adopt a coiled-coil conformation. Over residues 187-199 (PSPPATEPGPVPS) the composition is skewed to pro residues. A Phosphoserine modification is found at Ser-199. Ser-200 bears the Phosphoserine; by MAPK12 mark. 2 positions are modified to phosphothreonine: Thr-207 and Thr-229. One can recognise a UBX domain in the interval 209–291 (REYDQCRIQV…GLVPSAVLIV (83 aa)). Ser-270 carries the post-translational modification Phosphoserine.

As to quaternary structure, component of a complex required to couple retrotranslocation, ubiquitination and deglycosylation composed of NGLY1, SAKS1, AMFR, VCP and RAD23B. Interacts with HOMER2. Interacts directly with VCP. Interacts with BRCA1 and BARD1; interaction takes place when BRCA1 is not autoubiquitinated bur is strongly enhanced in the presence of autoubiquitinated BRCA1.

It localises to the cytoplasm. Functionally, ubiquitin-binding protein that interacts with the BRCA1-BARD1 heterodimer, and regulates its activity. Specifically binds 'Lys-6'-linked polyubiquitin chains. Interaction with autoubiquitinated BRCA1, leads to inhibit the E3 ubiquitin-protein ligase activity of the BRCA1-BARD1 heterodimer. Component of a complex required to couple deglycosylation and proteasome-mediated degradation of misfolded proteins in the endoplasmic reticulum that are retrotranslocated in the cytosol. This chain is UBX domain-containing protein 1 (UBXN1), found in Bos taurus (Bovine).